The sequence spans 1578 residues: E3 ubiquitin-protein ligase HECW2 (1578 aa).

Serine 48 bears the Phosphoserine mark. The 128-residue stretch at 171–298 folds into the C2 domain; that stretch reads MEGGASGSLH…LERQAGDQML (128 aa). Disordered stretches follow at residues 341 to 453 and 496 to 802; these read HTVN…FPTD and IDDG…PSVR. The segment covering 386 to 406 has biased composition (polar residues); that stretch reads RTSSTLEIDTEDLISTSSRNS. Over residues 518 to 532 the composition is skewed to basic and acidic residues; that stretch reads ASIHETASLEERLEN. Residues 559–576 show a composition bias toward polar residues; the sequence is SADQGSTELCSSQEVDQP. A compositionally biased stretch (low complexity) spans 577 to 593; it reads TSGADAGASDTSGGSRR. Polar residues-rich tracts occupy residues 597–614, 643–664, and 688–708; these read ETES…SSET, SSCN…SSLE, and PTSS…SSLP. Composition is skewed to low complexity over residues 721–735, 746–755, and 769–782; these read AAEA…ELGE, AAAAAPAAAA, and AQGA…QEEG. An interaction with TP73 region spans residues 737–1074; sequence WQRRGSLEGA…PRPSSTFNTV (338 aa). One can recognise a WW 1 domain in the interval 813–846; the sequence is EALPPNWEARIDSHGRIFYVDHVNRTTTWQRPTA. The stretch at 853-880 forms a coiled coil; it reads LQRSNSIQQMEQLNRRYQSIRRTMTNER. A phosphoserine mark is found at serine 858 and serine 915. Residues 991-1024 form the WW 2 domain; it reads LELPRGWEMKHDHQGKAFFVDHNSRTTTFIDPRL. Disordered regions lie at residues 1030-1075 and 1167-1193; these read RPTS…NTVS and CQSP…RAPA. Residues 1037–1046 are compositionally biased toward basic residues; it reads HRQHLTRQRS. Over residues 1167–1187 the composition is skewed to polar residues; the sequence is CQSPRGSPVSSPQNSPGTQRA. The residue at position 1181 (serine 1181) is a Phosphoserine. The HECT domain maps to 1243-1578; it reads SRKDLQRNKL…VEETSTFGLE (336 aa). The active-site Glycyl thioester intermediate is cysteine 1546.

Interacts with TP73. Interacts with FZR1.

It localises to the cytoplasm. It is found in the cytoskeleton. Its subcellular location is the spindle. The catalysed reaction is S-ubiquitinyl-[E2 ubiquitin-conjugating enzyme]-L-cysteine + [acceptor protein]-L-lysine = [E2 ubiquitin-conjugating enzyme]-L-cysteine + N(6)-ubiquitinyl-[acceptor protein]-L-lysine.. The protein operates within protein modification; protein ubiquitination. E3 ubiquitin-protein ligase that mediates ubiquitination of TP73. Acts to stabilize TP73 and enhance activation of transcription by TP73. Involved in the regulation of mitotic metaphase/anaphase transition. This Mus musculus (Mouse) protein is E3 ubiquitin-protein ligase HECW2 (Hecw2).